The chain runs to 566 residues: Type IV pilus assembly ATPase PilB (566 aa).

Residue 326-333 coordinates ATP; it reads GPTGSGKT. Zn(2+) is bound by residues cysteine 459, cysteine 462, cysteine 494, and cysteine 497.

It belongs to the GSP E family. Homohexamer. Interacts with PilC. Interacts with FimX; this interaction positively regulates T4P assembly and twitching motility by promoting the activity of the PilB ATPase.

The protein resides in the cytoplasm. Its function is as follows. ATPase component of the type IV pilus (T4P) that plays a role in surface and host cell adhesion, colonization, biofilm maturation, virulence, and twitching, a form of surface-associated motility facilitated by cycles of extension, adhesion, and retraction of T4P fibers. Acts as a molecular motor to provide the energy that is required for biogenesis of the pilus and the extrusion of substrates generated in the cytoplasm. PilB ATPase activity is also essential for T4P extension while antagonist PilT ATPase activity is required for T4P retraction. This chain is Type IV pilus assembly ATPase PilB (pilB), found in Pseudomonas aeruginosa (strain ATCC 15692 / DSM 22644 / CIP 104116 / JCM 14847 / LMG 12228 / 1C / PRS 101 / PAO1).